Here is a 275-residue protein sequence, read N- to C-terminus: Large ribosomal subunit protein uL2c (275 aa).

The segment at 219 to 254 is disordered; it reads TVRGSVMNPCDHPHGGGEGRAPIGRTRPLTPWGKPA.

Belongs to the universal ribosomal protein uL2 family. As to quaternary structure, part of the 50S ribosomal subunit.

Its subcellular location is the plastid. It localises to the chloroplast. The protein is Large ribosomal subunit protein uL2c (rpl2) of Phaeodactylum tricornutum (strain CCAP 1055/1).